The primary structure comprises 354 residues: NADH-quinone oxidoreductase subunit H (354 aa).

8 helical membrane passes run 22–42, 91–111, 124–144, 162–182, 203–223, 250–270, 291–311, and 326–346; these read ILIRAVLIVVPVLLCVAYLIL, YLVAPLMVLMPAVAVWAVIPF, LLYVMAISSVGVYGVILAGWA, VSYEIAMGFALVTVLMVSGSL, LLSWNWLPLLPMFGVYFISGV, GMTFALFFLAEYINMIIISTM, IPGFFWLVIKVFLLLSVFIWI, and LGWKIFIPLTVAWLIIVAIWI.

This sequence belongs to the complex I subunit 1 family. In terms of assembly, NDH-1 is composed of 14 different subunits. Subunits NuoA, H, J, K, L, M, N constitute the membrane sector of the complex.

It is found in the cell inner membrane. The enzyme catalyses a quinone + NADH + 5 H(+)(in) = a quinol + NAD(+) + 4 H(+)(out). NDH-1 shuttles electrons from NADH, via FMN and iron-sulfur (Fe-S) centers, to quinones in the respiratory chain. The immediate electron acceptor for the enzyme in this species is believed to be ubiquinone. Couples the redox reaction to proton translocation (for every two electrons transferred, four hydrogen ions are translocated across the cytoplasmic membrane), and thus conserves the redox energy in a proton gradient. This subunit may bind ubiquinone. This Cupriavidus metallidurans (strain ATCC 43123 / DSM 2839 / NBRC 102507 / CH34) (Ralstonia metallidurans) protein is NADH-quinone oxidoreductase subunit H.